The sequence spans 124 residues: Putative iron-sulfur cluster insertion protein ErpA (124 aa).

3 residues coordinate iron-sulfur cluster: Cys-52, Cys-116, and Cys-118.

This sequence belongs to the HesB/IscA family. As to quaternary structure, homodimer. Iron-sulfur cluster is required as a cofactor.

Required for insertion of 4Fe-4S clusters. The protein is Putative iron-sulfur cluster insertion protein ErpA of Ralstonia nicotianae (strain ATCC BAA-1114 / GMI1000) (Ralstonia solanacearum).